The primary structure comprises 436 residues: tRNA pseudouridine synthase Pus10 (436 aa).

The Nucleophile role is filled by Asp254. Substrate-binding residues include Tyr322 and Tyr394.

The protein belongs to the pseudouridine synthase Pus10 family.

The enzyme catalyses uridine(54) in tRNA = pseudouridine(54) in tRNA. It carries out the reaction uridine(55) in tRNA = pseudouridine(55) in tRNA. Responsible for synthesis of pseudouridine from uracil-54 and uracil-55 in the psi GC loop of transfer RNAs. The chain is tRNA pseudouridine synthase Pus10 from Methanopyrus kandleri (strain AV19 / DSM 6324 / JCM 9639 / NBRC 100938).